The following is a 96-amino-acid chain: Large ribosomal subunit protein bL28 (96 aa).

Residues 1–21 (MSRVCELTGKGPMTGNNVSHA) form a disordered region.

The protein belongs to the bacterial ribosomal protein bL28 family.

In Jannaschia sp. (strain CCS1), this protein is Large ribosomal subunit protein bL28.